A 347-amino-acid chain; its full sequence is MVNVGVLGATGMVGQRFIQMLDKHPEFELTTLAASSRSAGKPYGEVANWYLDCEMPESVRDMEVVETDPSAVGDVDILFSALPADVARKVEPKFAEKYIVASNASAMRMEPDVPLVIPEVNPEFLDLIEVQQRRRGWDGFIVTNPNCSTIALTLTLKPIYDAYTIKRVYVSTMQAVSGAGYNGVPSMAILDNLVPFIGGEEEKIETETLHLLGELDEGVVKPASFGVSASCHRVPVVDGHTEAVFIELDDEFDIDDVREAMDKFRGLPQKLGLHSAPEKPVVVRDEENRPQPRMDRDMDGGMAVTVGRLREDAAFKNSLRYVLVGHNTVRGAAGASILNAELINEIL.

NADP(+) is bound by residues 10–13 (TGMV) and 37–38 (RS). Arg108 lines the phosphate pocket. The Acyl-thioester intermediate role is filled by Cys147. Position 174 (Gln174) interacts with substrate. 177 to 178 (SG) contacts NADP(+). Glu200 provides a ligand contact to substrate. Phosphate is bound at residue Lys203. A substrate-binding site is contributed by Arg233. His240 functions as the Proton acceptor in the catalytic mechanism. The segment at 276 to 299 (APEKPVVVRDEENRPQPRMDRDMD) is disordered. Residues 281-299 (VVVRDEENRPQPRMDRDMD) are compositionally biased toward basic and acidic residues. 327–328 (NT) is a binding site for NADP(+).

The protein belongs to the aspartate-semialdehyde dehydrogenase family. In terms of assembly, homodimer.

It catalyses the reaction L-aspartate 4-semialdehyde + phosphate + NADP(+) = 4-phospho-L-aspartate + NADPH + H(+). It functions in the pathway amino-acid biosynthesis; L-lysine biosynthesis via DAP pathway; (S)-tetrahydrodipicolinate from L-aspartate: step 2/4. It participates in amino-acid biosynthesis; L-methionine biosynthesis via de novo pathway; L-homoserine from L-aspartate: step 2/3. Its pathway is amino-acid biosynthesis; L-threonine biosynthesis; L-threonine from L-aspartate: step 2/5. In terms of biological role, catalyzes the NADPH-dependent formation of L-aspartate-semialdehyde (L-ASA) by the reductive dephosphorylation of L-aspartyl-4-phosphate. The protein is Aspartate-semialdehyde dehydrogenase of Methanothermobacter thermautotrophicus (strain ATCC 29096 / DSM 1053 / JCM 10044 / NBRC 100330 / Delta H) (Methanobacterium thermoautotrophicum).